The chain runs to 122 residues: Ribosome-binding factor A (122 aa).

This sequence belongs to the RbfA family. As to quaternary structure, monomer. Binds 30S ribosomal subunits, but not 50S ribosomal subunits or 70S ribosomes.

Its subcellular location is the cytoplasm. Its function is as follows. One of several proteins that assist in the late maturation steps of the functional core of the 30S ribosomal subunit. Associates with free 30S ribosomal subunits (but not with 30S subunits that are part of 70S ribosomes or polysomes). Required for efficient processing of 16S rRNA. May interact with the 5'-terminal helix region of 16S rRNA. The polypeptide is Ribosome-binding factor A (Dichelobacter nodosus (strain VCS1703A)).